Here is a 633-residue protein sequence, read N- to C-terminus: Electron transfer flavoprotein-ubiquinone oxidoreductase, mitochondrial (633 aa).

The transit peptide at 1–90 (MHRFLVKLSS…NGITSSRCIS (90 aa)) directs the protein to the mitochondrion. Residue 102–116 (VLIVGAGPAGLSAAI) participates in FAD binding. Residues 140 to 161 (VGGHIISGNVFEPLALDELLPH) lie within the membrane without spanning it. 2 residues coordinate a ubiquinone: Gly334 and Gly335. The stretch at 401–421 (IPYPVFPGGAIIGCSAGFLNV) is an intramembrane region. Cys578, Cys602, Cys605, and Cys608 together coordinate [4Fe-4S] cluster. One can recognise a 4Fe-4S ferredoxin-type domain in the interval 593 to 622 (PKLQINAQNCLHCKACDIKDPKQNIEWTVP).

It belongs to the ETF-QO/FixC family. It depends on [4Fe-4S] cluster as a cofactor. Requires FAD as cofactor.

Its subcellular location is the mitochondrion inner membrane. The enzyme catalyses a ubiquinone + reduced [electron-transfer flavoprotein] = a ubiquinol + oxidized [electron-transfer flavoprotein] + H(+). Up-regulated by KIN10, by S1-bZIP specific dimers, and also by C/S1 bZIP heterodimers. In terms of biological role, accepts electrons from ETF and reduces ubiquinone. May act downstream of IVD and D2HGDH in the degradation of phytol or chlorophyll during dark-induced senescence and sugar starvation. This chain is Electron transfer flavoprotein-ubiquinone oxidoreductase, mitochondrial (ETFQO), found in Arabidopsis thaliana (Mouse-ear cress).